Consider the following 445-residue polypeptide: Putrescine hydroxycinnamoyltransferase 1 (445 aa).

Active-site proton acceptor residues include His-154 and Asp-388.

This sequence belongs to the plant acyltransferase family. Expressed in leaves.

In terms of biological role, hydroxycinnamoyl transferase that catalyzes the transfer of an acyl from p-coumaryol-CoA to putrescine, to produce coumaroyl putrescine. This is Putrescine hydroxycinnamoyltransferase 1 from Oryza sativa subsp. japonica (Rice).